Here is a 370-residue protein sequence, read N- to C-terminus: MYKRKTASIVKRDSSAAGTTSSAMMMKVDSAETSVRSQSYESTPVSMDTSPDPPTPIKSPSNSQSQSQPGQQRSVGSLVLLTQKFVDLVKANEGSIDLKAATKILDVQKRRIYDITNVLEGIGLIDKGRHCSLVRWRGGGFNNAKDQENYDLARSRTNHLKMLEDDLDRQLEYAQRNLRYVMQDPSNRSYAYVTRDDLLDIFGDDSVFTIPNYDEEVDIKRNHYELAVSLDNGSAIDIRLVTNQGKSTTNPHDVDGFFDYHRLDTPSPSTSSHSSEDGNAPACAGNVITDEHGYSCNPGMKDEMKLLENELTAKIIFQNYLSGHSLRRFYPDDPNLENPPLLQLNPPQEDFNFALKSDEGICELFDVQCS.

A disordered region spans residues 1-73 (MYKRKTASIV…QSQSQPGQQR (73 aa)). The segment covering 15–26 (SAAGTTSSAMMM) has biased composition (low complexity). Over residues 31 to 49 (AETSVRSQSYESTPVSMDT) the composition is skewed to polar residues. The segment covering 59–73 (SPSNSQSQSQPGQQR) has biased composition (low complexity). The DNA-binding element occupies 72-137 (QRSVGSLVLL…GRHCSLVRWR (66 aa)). The segment at 137 to 226 (RGGGFNNAKD…VDIKRNHYEL (90 aa)) is dimerization.

The protein belongs to the E2F/DP family. Forms a heterodimer with Dp. Interacts with Rbf/Rbf1 and Rbf2. Component of the DREAM complex, which is at least composed of Myb, Caf1-55, mip40, mip120, mip130, E2f2, Dp, Rbf, Rbf2, lin-52, HDAC1/Rpd3 and l(3)mbt. Ubiquitously expressed in eye disk.

It localises to the nucleus. In terms of biological role, transcriptional repressor that binds to E2f sites and represses E2f-regulated target genes. Binding to E2f sites requires transcription factor Dp. Acts synergistically with Rbf2 to antagonize E2f1-mediated transcriptional activation. Component of the DREAM complex, a multiprotein complex that can both act as a transcription activator or repressor depending on the context. The DREAM complex is required for recruiting E2f2 at differentiation-specific promoters and for stabilizing E2f2-Rbf complexes during S phase. During development, the complex represses transcription of developmentally controlled E2f target genes. During oogenesis, plays a role in restricting DNA synthesis to sites of chorion gene amplification in late stage ovarian follicle cells. Plays an inhibitory role in ionizing radiation (IR)-induced p53-independent apoptosis. May be involved in cell cycle exit by temporarily limiting CycE-dependent activation of E2f-regulated transcription. This is Transcription factor E2F2 (E2f2) from Drosophila melanogaster (Fruit fly).